The following is a 126-amino-acid chain: Small ribosomal subunit protein uS13 (126 aa).

A disordered region spans residues 98–126 (PVRGQSTKNNARTRKGRKKTVANKKKATK). The segment covering 108–126 (ARTRKGRKKTVANKKKATK) has biased composition (basic residues).

It belongs to the universal ribosomal protein uS13 family. Part of the 30S ribosomal subunit. Forms a loose heterodimer with protein S19. Forms two bridges to the 50S subunit in the 70S ribosome.

Located at the top of the head of the 30S subunit, it contacts several helices of the 16S rRNA. In the 70S ribosome it contacts the 23S rRNA (bridge B1a) and protein L5 of the 50S subunit (bridge B1b), connecting the 2 subunits; these bridges are implicated in subunit movement. Contacts the tRNAs in the A and P-sites. This Phocaeicola vulgatus (strain ATCC 8482 / DSM 1447 / JCM 5826 / CCUG 4940 / NBRC 14291 / NCTC 11154) (Bacteroides vulgatus) protein is Small ribosomal subunit protein uS13.